The sequence spans 134 residues: Large ribosomal subunit protein uL16c (134 aa).

Belongs to the universal ribosomal protein uL16 family. As to quaternary structure, part of the 50S ribosomal subunit.

The protein resides in the plastid. The protein localises to the chloroplast. This chain is Large ribosomal subunit protein uL16c, found in Oltmannsiellopsis viridis (Marine flagellate).